Consider the following 442-residue polypeptide: 3-isopropylmalate dehydratase large subunit (442 aa).

[4Fe-4S] cluster contacts are provided by C347, C407, and C410.

The protein belongs to the aconitase/IPM isomerase family. LeuC type 1 subfamily. As to quaternary structure, heterodimer of LeuC and LeuD. The cofactor is [4Fe-4S] cluster.

The enzyme catalyses (2R,3S)-3-isopropylmalate = (2S)-2-isopropylmalate. It participates in amino-acid biosynthesis; L-leucine biosynthesis; L-leucine from 3-methyl-2-oxobutanoate: step 2/4. In terms of biological role, catalyzes the isomerization between 2-isopropylmalate and 3-isopropylmalate, via the formation of 2-isopropylmaleate. This chain is 3-isopropylmalate dehydratase large subunit, found in Buchnera aphidicola subsp. Uroleucon solidaginis.